A 245-amino-acid polypeptide reads, in one-letter code: Sec-independent protein translocase protein TatC (245 aa).

A run of 6 helical transmembrane segments spans residues 17–37 (FISV…RSYI), 73–93 (FFAA…KFVA), 107–127 (FVSF…FVVV), 159–179 (VVVA…FAKI), 191–207 (FRIA…FMTP), and 210–230 (VLSQ…SILI).

The protein belongs to the TatC family. As to quaternary structure, the Tat system comprises two distinct complexes: a TatABC complex, containing multiple copies of TatA, TatB and TatC subunits, and a separate TatA complex, containing only TatA subunits. Substrates initially bind to the TatABC complex, which probably triggers association of the separate TatA complex to form the active translocon.

The protein localises to the cell inner membrane. In terms of biological role, part of the twin-arginine translocation (Tat) system that transports large folded proteins containing a characteristic twin-arginine motif in their signal peptide across membranes. Together with TatB, TatC is part of a receptor directly interacting with Tat signal peptides. This is Sec-independent protein translocase protein TatC from Campylobacter jejuni subsp. jejuni serotype O:2 (strain ATCC 700819 / NCTC 11168).